We begin with the raw amino-acid sequence, 144 residues long: Large ribosomal subunit protein uL15 (144 aa).

The disordered stretch occupies residues 1–52 (MRLNSLSPAEGAKHSAKRLGRGISSGLGKTGGRGHKGQKSRTGGGVRRGFEG).

The protein belongs to the universal ribosomal protein uL15 family. Part of the 50S ribosomal subunit.

In terms of biological role, binds to the 23S rRNA. The protein is Large ribosomal subunit protein uL15 of Actinobacillus pleuropneumoniae serotype 7 (strain AP76).